The chain runs to 223 residues: ATP phosphoribosyltransferase (223 aa).

Belongs to the ATP phosphoribosyltransferase family. Short subfamily. Heteromultimer composed of HisG and HisZ subunits.

It localises to the cytoplasm. The enzyme catalyses 1-(5-phospho-beta-D-ribosyl)-ATP + diphosphate = 5-phospho-alpha-D-ribose 1-diphosphate + ATP. It participates in amino-acid biosynthesis; L-histidine biosynthesis; L-histidine from 5-phospho-alpha-D-ribose 1-diphosphate: step 1/9. Its function is as follows. Catalyzes the condensation of ATP and 5-phosphoribose 1-diphosphate to form N'-(5'-phosphoribosyl)-ATP (PR-ATP). Has a crucial role in the pathway because the rate of histidine biosynthesis seems to be controlled primarily by regulation of HisG enzymatic activity. This is ATP phosphoribosyltransferase from Desulfitobacterium hafniense (strain Y51).